The primary structure comprises 851 residues: MPKNSHHHRSSSVNSTKSRSTESTNKWKIPHYYRRSASGSTQASPDRNSSTGSCSTPVLPTMNVMSSPKKVLLEDPRDNHTKAKKSSRKKSGEMVFVNYTVQDTANENDTDLQTQPVSVPAPKAKLKKKSSKRRMLKIFGSSKNEHIEDIVEEQPMVLQMDSESKPLSGTPISESGIDASSLTTKRSYNSFLKHNRLNGKTPFSGNLSFPSLNMMGNTTDLPIDNNDFCSEKEVVPKSTHDPSLAKPPSRFTESETNSTPNLSSIPLMNTKNTRLKYNKVAPQSSDRQKSQESGLYHSTESFNFKDQNYSNNKSSLSLNSDLSTPHFAKHSPDSPRTSRSFNCGDSQSKVKLPEENDASIAFSKMFTRKRANTGGSTCSLASPTIAQTIQQSNIKVNKLPTQRTTSVGSLSSMSNRYSPIRVASPGRARSATRGSSLYRLSRDLNSLPSVTDLPEMDSTTPVNEIFLDGQPQHKSGSVKGGHRKKQESISDAQRIQHSNSYITTPSSSLVTPPYYMTGYTLPSSASASSTPNVLETHNMNFVPSTSTVTSYRPSSNFSSFDKEYSNENDASGEFSAFNTPMENIPALKGIPRSTLEENEEEDVLVQDIPNTAHFQRRDIMGMDTHRKDDSLDFNSLMPHGSTTSSSIVDSVMTNSISTTTSNATGNYFQDQDKYTLVNTGLGLSDANLDHFIRSQWKHASRSESNNNTGNRVSYSGSTPNNVDTTKTNLQVYTEFDFENPESFFHEQSKLLGEMGHSNNNSNSAINMNEPKSADTYIGNISPDTSATVSLGDLMGSNVSNNSERNFYDGHTFVPQYQANSSVENSNNQNAAPIANNDIDNNLQSFYFDNSN.

Residues 1-10 show a composition bias toward basic residues; sequence MPKNSHHHRS. Disordered stretches follow at residues 1 to 91, 233 to 271, 315 to 355, 466 to 504, and 698 to 722; these read MPKN…RKKS, EVVPKSTHDPSLAKPPSRFTESETNSTPNLSSIPLMNTK, SLSL…LPEE, FLDGQPQHKSGSVKGGHRKKQESISDAQRIQHSNSYITT, and HASRSESNNNTGNRVSYSGSTPNNV. Residues 11–23 show a composition bias toward low complexity; sequence SSVNSTKSRSTES. Residues 37–66 show a composition bias toward polar residues; that stretch reads ASGSTQASPDRNSSTGSCSTPVLPTMNVMS. Residues 71 to 81 are compositionally biased toward basic and acidic residues; the sequence is VLLEDPRDNHT. Composition is skewed to polar residues over residues 254–271, 334–349, 489–504, and 702–722; these read SETNSTPNLSSIPLMNTK, SPRTSRSFNCGDSQSK, ISDAQRIQHSNSYITT, and SESNNNTGNRVSYSGSTPNNV. Ser-334 is modified (phosphoserine). Ser-757 and Ser-761 each carry phosphoserine.

Functionally, dosage dependent suppressor of PKC1 deletion and MPK1 deletion. Involved in cell lysis. This chain is Protein BCK2 (BCK2), found in Saccharomyces cerevisiae (strain ATCC 204508 / S288c) (Baker's yeast).